A 132-amino-acid chain; its full sequence is Probable histone H2A.2 (132 aa).

This sequence belongs to the histone H2A family. The nucleosome is a histone octamer containing two molecules each of H2A, H2B, H3 and H4 assembled in one H3-H4 heterotetramer and two H2A-H2B heterodimers. The octamer wraps approximately 147 bp of DNA. Not ubiquitinated. As to expression, expressed mainly in non-dividing tissues of the plant. Also found in meristems and dividing cells.

The protein resides in the nucleus. The protein localises to the chromosome. Core component of nucleosome. Nucleosomes wrap and compact DNA into chromatin, limiting DNA accessibility to the cellular machineries which require DNA as a template. Histones thereby play a central role in transcription regulation, DNA repair, DNA replication and chromosomal stability. DNA accessibility is regulated via a complex set of post-translational modifications of histones, also called histone code, and nucleosome remodeling. The sequence is that of Probable histone H2A.2 from Arabidopsis thaliana (Mouse-ear cress).